Reading from the N-terminus, the 557-residue chain is MEILQIAIILIVFVLLCIPIGRYMYKVSEHKKTLLDPVLDKIDGFIYKLSGIQKEEEMNWKQYIFALLMCNAVPAIIGYIILRIQAVGIFNPNHVKGMEQGLTFNTIISFLTNTNLQDYAGETGASYLSQMIVITFFMFFAAATGIAVALAFIRALSGKKKLGNFYVDLVRITTRILLPLSIIVAIFYIGQGVPQTLSANKTVTTIEGKLQNIPLGPVASLEAIKLIGTNGGGFFSANSSHPFENPTPLTNSVQIITLLLLAGSMVVCFGHMIKKKKQAVAIFAAMMVLLLAGAAICFSAEKAGNPALSRIGLSQSMGNLEGKEERFGIAGSSLFTTVTTDTSCGAVNNMHDSLTPIGGAVPLINMMLNVIFGGVGVGFMNMIMYAILTVFLCGLMVGRTPEFLNKKIEGKEIKLVAFAIIVHPFLILMSSALALTTKQGLAGISNPGFHGLTQVLYQFTSSAANNGSGFEGLIDNTMFWNVSAGVVMFLGRYLSIIILLAVASSFAAKRAVPATQGTFKTDNTIFTVTLIVIIVIIGALTFLPAVALGPISEYLTL.

Helical transmembrane passes span 1-21 (MEIL…IPIG), 62-82 (QYIF…YIIL), 132-152 (IVIT…ALAF), 176-196 (ILLP…VPQT), 253-273 (VQII…GHMI), 279-299 (AVAI…ICFS), 371-391 (IFGG…LTVF), 415-435 (LVAF…ALAL), 482-502 (VSAG…LLAV), and 528-548 (VTLI…AVAL).

It belongs to the KdpA family. As to quaternary structure, the system is composed of three essential subunits: KdpA, KdpB and KdpC.

Its subcellular location is the cell membrane. In terms of biological role, part of the high-affinity ATP-driven potassium transport (or Kdp) system, which catalyzes the hydrolysis of ATP coupled with the electrogenic transport of potassium into the cytoplasm. This subunit binds the extracellular potassium ions and delivers the ions to the membrane domain of KdpB through an intramembrane tunnel. This chain is Potassium-transporting ATPase potassium-binding subunit, found in Clostridium acetobutylicum (strain ATCC 824 / DSM 792 / JCM 1419 / IAM 19013 / LMG 5710 / NBRC 13948 / NRRL B-527 / VKM B-1787 / 2291 / W).